Consider the following 566-residue polypeptide: Multidrug and toxin extrusion protein 1 (566 aa).

Met1 carries the post-translational modification N-acetylmethionine. 13 helical membrane-spanning segments follow: residues 37 to 57 (LLVL…ISFI), 72 to 92 (AVTL…HGLS), 120 to 140 (LILL…EQIL), 152 to 172 (LTQT…LYTL), 176 to 196 (YLLN…ANLV), 216 to 236 (ALAN…YILW), 257 to 276 (SFLQ…WWAY), 295 to 315 (SITY…SVAA), 336 to 356 (AISL…LLGC), 370 to 390 (IVAL…FEAL), 409 to 429 (IVNA…LMFV), 437 to 457 (LWSG…VFIA), and 543 to 563 (GLLF…RVYI).

The protein belongs to the multi antimicrobial extrusion (MATE) (TC 2.A.66.1) family. Highly expressed in kidney and placenta, moderately in stomach, colon, lung, spleen, skeletal muscle and prostate, and slightly in spleen. In the kidney, found in medulla and cortex, especially in the proximal convoluted and straight tubules. No expression was observed in heart, brain, small intestine and liver. Expressed in Sertoli cells in testis.

It localises to the cell membrane. Its subcellular location is the apical cell membrane. The enzyme catalyses thiamine(out) + H(+)(in) = thiamine(in) + H(+)(out). It catalyses the reaction estrone 3-sulfate(in) + H(+)(out) = estrone 3-sulfate(out) + H(+)(in). It carries out the reaction creatinine(in) + H(+)(out) = creatinine(out) + H(+)(in). The catalysed reaction is agmatine(in) + H(+)(out) = agmatine(out) + H(+)(in). Functionally, multidrug efflux pump that functions as a H(+)/organic cation antiporter. Plays a physiological role in the excretion of cationic compounds including endogenous metabolites, drugs, toxins through the kidney and liver, into urine and bile respectively. Mediates the efflux of endogenous compounds such as creatinine, vitamin B1/thiamine, agmatine and estrone-3-sulfate. May also contribute to regulate the transport of cationic compounds in testis across the blood-testis-barrier. The protein is Multidrug and toxin extrusion protein 1 (Slc47a1) of Rattus norvegicus (Rat).